The chain runs to 496 residues: NADH-quinone oxidoreductase subunit N (496 aa).

Transmembrane regions (helical) follow at residues serine 16–isoleucine 36, cysteine 46–leucine 66, isoleucine 79–leucine 99, phenylalanine 116–phenylalanine 136, phenylalanine 166–alanine 186, leucine 208–isoleucine 228, leucine 245–methionine 267, aspartate 278–glutamine 298, methionine 304–serine 324, leucine 331–valine 351, alanine 382–tryptophan 402, isoleucine 422–phenylalanine 442, and valine 464–leucine 484.

Belongs to the complex I subunit 2 family. In terms of assembly, NDH-1 is composed of 14 different subunits. Subunits NuoA, H, J, K, L, M, N constitute the membrane sector of the complex.

The protein localises to the cell inner membrane. The enzyme catalyses a quinone + NADH + 5 H(+)(in) = a quinol + NAD(+) + 4 H(+)(out). NDH-1 shuttles electrons from NADH, via FMN and iron-sulfur (Fe-S) centers, to quinones in the respiratory chain. The immediate electron acceptor for the enzyme in this species is believed to be ubiquinone. Couples the redox reaction to proton translocation (for every two electrons transferred, four hydrogen ions are translocated across the cytoplasmic membrane), and thus conserves the redox energy in a proton gradient. This Campylobacter concisus (strain 13826) protein is NADH-quinone oxidoreductase subunit N.